The sequence spans 202 residues: Na(+)-translocating NADH-quinone reductase subunit E (202 aa).

6 helical membrane-spanning segments follow: residues 11 to 31, 35 to 55, 79 to 99, 114 to 134, 144 to 164, and 180 to 200; these read AVFI…FIAI, VETA…TVPA, LSFL…QILE, GVFL…LFMV, VVYG…LAGI, and LGIT…FSGV.

Belongs to the NqrDE/RnfAE family. In terms of assembly, composed of six subunits; NqrA, NqrB, NqrC, NqrD, NqrE and NqrF.

It localises to the cell inner membrane. It catalyses the reaction a ubiquinone + n Na(+)(in) + NADH + H(+) = a ubiquinol + n Na(+)(out) + NAD(+). In terms of biological role, NQR complex catalyzes the reduction of ubiquinone-1 to ubiquinol by two successive reactions, coupled with the transport of Na(+) ions from the cytoplasm to the periplasm. NqrA to NqrE are probably involved in the second step, the conversion of ubisemiquinone to ubiquinol. The polypeptide is Na(+)-translocating NADH-quinone reductase subunit E (Stutzerimonas stutzeri (strain A1501) (Pseudomonas stutzeri)).